The chain runs to 25 residues: Caerin-1.7 (25 aa).

The residue at position 25 (leucine 25) is a Leucine amide.

Belongs to the frog skin active peptide (FSAP) family. Caerin subfamily. Caerin-1.7.1 does not have any antibacterial activity. In terms of tissue distribution, expressed by the skin dorsal glands.

It localises to the secreted. In terms of biological role, antibacterial peptide, that adopts an alpha helical conformation which can disrupt bacterial membranes. Each caerin displays a different antimicrobial specificity. This Ranoidea xanthomera (Northern orange-eyed tree frog) protein is Caerin-1.7.